We begin with the raw amino-acid sequence, 610 residues long: UvrABC system protein C (610 aa).

Residues 16–94 (SQPGVYRMYD…IKLYQPRYNV (79 aa)) form the GIY-YIG domain. The UVR domain occupies 204–239 (DQVLTQLIARMEKASQSLEFEEAARIRDQIQAVRRV). Residues 540–559 (HAISGHRKKRAKVKSTSSLE) are disordered. Positions 543 to 552 (SGHRKKRAKV) are enriched in basic residues.

It belongs to the UvrC family. Interacts with UvrB in an incision complex.

It is found in the cytoplasm. Functionally, the UvrABC repair system catalyzes the recognition and processing of DNA lesions. UvrC both incises the 5' and 3' sides of the lesion. The N-terminal half is responsible for the 3' incision and the C-terminal half is responsible for the 5' incision. The protein is UvrABC system protein C of Klebsiella pneumoniae (strain 342).